We begin with the raw amino-acid sequence, 503 residues long: Maturase K (503 aa).

Belongs to the intron maturase 2 family. MatK subfamily.

The protein localises to the plastid. It is found in the chloroplast. In terms of biological role, usually encoded in the trnK tRNA gene intron. Probably assists in splicing its own and other chloroplast group II introns. In Silene latifolia (White campion), this protein is Maturase K.